The chain runs to 509 residues: MFS transporter fsdG (509 aa).

2 N-linked (GlcNAc...) asparagine glycosylation sites follow: N8 and N26. A run of 4 helical transmembrane segments spans residues 63-83 (FLIHTILVSMLCLAGNLATTM), 103-123 (IALTVSIYLLGFALAPMVTSP), 139-159 (IFFLGFNLACAFSSNIGMFIA), and 162-182 (FLAGCAGSAPMTVGGGTIADF). N189 carries N-linked (GlcNAc...) asparagine glycosylation. Transmembrane regions (helical) follow at residues 195–215 (LFALGPLLGPVIGPIVGGFVA), 222–242 (WTFRIMSIVIAVLSILSCIFL), 298–318 (LIFLPQVLILSFYTAFVFGLI), and 341–361 (GLSYIGIGFGMVGALFLFNFI). An N-linked (GlcNAc...) asparagine glycan is attached at N367. 4 consecutive transmembrane segments (helical) span residues 380–400 (YLPLMTWFSPLLPIGFFWYGW), 408–428 (WVVPILGTFFVGFGSFAIIMP), 442–462 (AASVLAASNMMRYVFAAFLPL), and 474–494 (GWGNSLLGFLCVVLAPVPAIF).

It belongs to the major facilitator superfamily.

It localises to the cell membrane. Functionally, efflux pump that might be required for efficient secretion of fusaridione A or other secondary metabolies produced by the fusaridione A gene cluster. This Fusarium heterosporum protein is MFS transporter fsdG.